We begin with the raw amino-acid sequence, 324 residues long: Aspartate carbamoyltransferase catalytic subunit (324 aa).

Arg-71 and Thr-72 together coordinate carbamoyl phosphate. An L-aspartate-binding site is contributed by Lys-99. Carbamoyl phosphate contacts are provided by Arg-121, His-151, and Gln-154. 2 residues coordinate L-aspartate: Arg-184 and Arg-239. Gly-280 and Pro-281 together coordinate carbamoyl phosphate.

It belongs to the aspartate/ornithine carbamoyltransferase superfamily. ATCase family. In terms of assembly, heterododecamer (2C3:3R2) of six catalytic PyrB chains organized as two trimers (C3), and six regulatory PyrI chains organized as three dimers (R2).

The enzyme catalyses carbamoyl phosphate + L-aspartate = N-carbamoyl-L-aspartate + phosphate + H(+). It participates in pyrimidine metabolism; UMP biosynthesis via de novo pathway; (S)-dihydroorotate from bicarbonate: step 2/3. In terms of biological role, catalyzes the condensation of carbamoyl phosphate and aspartate to form carbamoyl aspartate and inorganic phosphate, the committed step in the de novo pyrimidine nucleotide biosynthesis pathway. The polypeptide is Aspartate carbamoyltransferase catalytic subunit (Cupriavidus necator (strain ATCC 17699 / DSM 428 / KCTC 22496 / NCIMB 10442 / H16 / Stanier 337) (Ralstonia eutropha)).